The following is a 96-amino-acid chain: MNIRPLHDRIVVRRIEEETKTAGGILLPGSAQEKPSQGEVLATGNGQIRDNGETRALDVKTGDKVLFGQYAGQTVKVDGEELLIMKESDVLGVLEG.

The disordered stretch occupies residues 26 to 48 (LLPGSAQEKPSQGEVLATGNGQI).

Belongs to the GroES chaperonin family. As to quaternary structure, heptamer of 7 subunits arranged in a ring. Interacts with the chaperonin GroEL.

It localises to the cytoplasm. Together with the chaperonin GroEL, plays an essential role in assisting protein folding. The GroEL-GroES system forms a nano-cage that allows encapsulation of the non-native substrate proteins and provides a physical environment optimized to promote and accelerate protein folding. GroES binds to the apical surface of the GroEL ring, thereby capping the opening of the GroEL channel. The polypeptide is Co-chaperonin GroES (Psychrobacter arcticus (strain DSM 17307 / VKM B-2377 / 273-4)).